The chain runs to 219 residues: 2-hydroxy-3-keto-5-methylthiopentenyl-1-phosphate phosphatase (219 aa).

Belongs to the HAD-like hydrolase superfamily. MtnX family.

The enzyme catalyses 2-hydroxy-5-methylsulfanyl-3-oxopent-1-enyl phosphate + H2O = 1,2-dihydroxy-5-(methylsulfanyl)pent-1-en-3-one + phosphate. It participates in amino-acid biosynthesis; L-methionine biosynthesis via salvage pathway; L-methionine from S-methyl-5-thio-alpha-D-ribose 1-phosphate: step 4/6. Its function is as follows. Dephosphorylates 2-hydroxy-3-keto-5-methylthiopentenyl-1-phosphate (HK-MTPenyl-1-P) yielding 1,2-dihydroxy-3-keto-5-methylthiopentene (DHK-MTPene). The sequence is that of 2-hydroxy-3-keto-5-methylthiopentenyl-1-phosphate phosphatase from Bacillus cereus (strain 03BB102).